A 196-amino-acid chain; its full sequence is uncharacterized protein (196 aa).

The protein resides in the mitochondrion. This is an uncharacterized protein from Paramecium tetraurelia.